Reading from the N-terminus, the 152-residue chain is MSTPARRRLMRDFKRLQEDPPVGVSGAPSENNIMQWNAVIFGPEGTPFEDGTFKLVIEFSEEYPNKPPTVRFLSKMFHPNVYADGSICLDILQNRWSPTYDVSSILTSIQSLLDEPNPNSPANSQAAQLYQENKREYEKRVSAIVEQSWNDS.

One can recognise a UBC core domain in the interval 4 to 150 (PARRRLMRDF…VSAIVEQSWN (147 aa)). Cys-88 acts as the Glycyl thioester intermediate in catalysis.

It belongs to the ubiquitin-conjugating enzyme family. Interacts with RAD18, UBR2 and WAC.

Its subcellular location is the cell membrane. The protein localises to the nucleus. It carries out the reaction S-ubiquitinyl-[E1 ubiquitin-activating enzyme]-L-cysteine + [E2 ubiquitin-conjugating enzyme]-L-cysteine = [E1 ubiquitin-activating enzyme]-L-cysteine + S-ubiquitinyl-[E2 ubiquitin-conjugating enzyme]-L-cysteine.. The protein operates within protein modification; protein ubiquitination. Functionally, E2 ubiquitin-conjugating enzyme that accepts ubiquitin from the ubiquitin-activating enzyme E1 and transfers it to a E3 ubiquitin-protein ligase. In vitro catalyzes 'Lys-11'-, as well as 'Lys-48'- and 'Lys-63'-linked polyubiquitination. Together with the E3 enzyme BRE1 (RNF20 and/or RNF40), plays a role in transcription regulation by catalyzing the monoubiquitination of histone H2B at 'Lys-120' to form H2BK120ub1. H2BK120ub1 gives a specific tag for epigenetic transcriptional activation, elongation by RNA polymerase II, telomeric silencing, and is also a prerequisite for H3K4me and H3K79me formation. May play a role in DNA repair. Associates to the E3 ligase RAD18 to form the UBE2B-RAD18 ubiquitin ligase complex involved in mono-ubiquitination of DNA-associated PCNA on 'Lys-164'. In association with the E3 enzyme UBR4, is involved in N-end rule-dependent protein degradation. May be involved in neurite outgrowth. In Bos taurus (Bovine), this protein is Ubiquitin-conjugating enzyme E2 B (UBE2B).